The following is a 338-amino-acid chain: Heat-inducible transcription repressor HrcA (338 aa).

Belongs to the HrcA family.

Negative regulator of class I heat shock genes (grpE-dnaK-dnaJ and groELS operons). Prevents heat-shock induction of these operons. This chain is Heat-inducible transcription repressor HrcA, found in Bacillus cereus (strain AH187).